Consider the following 343-residue polypeptide: Uroporphyrinogen decarboxylase (343 aa).

Substrate is bound by residues 25 to 29 (RQAGR), F44, D75, Y150, S205, and H320.

It belongs to the uroporphyrinogen decarboxylase family. In terms of assembly, homodimer.

It is found in the cytoplasm. It catalyses the reaction uroporphyrinogen III + 4 H(+) = coproporphyrinogen III + 4 CO2. It participates in porphyrin-containing compound metabolism; protoporphyrin-IX biosynthesis; coproporphyrinogen-III from 5-aminolevulinate: step 4/4. Its function is as follows. Catalyzes the decarboxylation of four acetate groups of uroporphyrinogen-III to yield coproporphyrinogen-III. The polypeptide is Uroporphyrinogen decarboxylase (Mesorhizobium japonicum (strain LMG 29417 / CECT 9101 / MAFF 303099) (Mesorhizobium loti (strain MAFF 303099))).